The primary structure comprises 417 residues: Gamma-glutamyl phosphate reductase (417 aa).

Belongs to the gamma-glutamyl phosphate reductase family.

The protein resides in the cytoplasm. It catalyses the reaction L-glutamate 5-semialdehyde + phosphate + NADP(+) = L-glutamyl 5-phosphate + NADPH + H(+). Its pathway is amino-acid biosynthesis; L-proline biosynthesis; L-glutamate 5-semialdehyde from L-glutamate: step 2/2. Functionally, catalyzes the NADPH-dependent reduction of L-glutamate 5-phosphate into L-glutamate 5-semialdehyde and phosphate. The product spontaneously undergoes cyclization to form 1-pyrroline-5-carboxylate. The polypeptide is Gamma-glutamyl phosphate reductase (Klebsiella pneumoniae subsp. pneumoniae (strain ATCC 700721 / MGH 78578)).